The sequence spans 473 residues: Trehalose-6-phosphate synthase (473 aa).

Arg-10 contacts D-glucose 6-phosphate. Gly-21–Gly-22 provides a ligand contact to UDP-alpha-D-glucose. D-glucose 6-phosphate is bound by residues Tyr-76 and Asp-130. The UDP-alpha-D-glucose site is built by Arg-262 and Lys-267. Arg-300 provides a ligand contact to D-glucose 6-phosphate. UDP-alpha-D-glucose is bound by residues Phe-339 and Leu-365 to Glu-369. The interval Thr-454 to Ala-473 is disordered.

It belongs to the glycosyltransferase 20 family. In terms of assembly, homotetramer.

It carries out the reaction D-glucose 6-phosphate + UDP-alpha-D-glucose = alpha,alpha-trehalose 6-phosphate + UDP + H(+). The protein operates within glycan biosynthesis; trehalose biosynthesis. Its function is as follows. Probably involved in the osmoprotection via the biosynthesis of trehalose. Catalyzes the transfer of glucose from UDP-alpha-D-glucose (UDP-Glc) to D-glucose 6-phosphate (Glc-6-P) to form trehalose-6-phosphate. Acts with retention of the anomeric configuration of the UDP-sugar donor. The sequence is that of Trehalose-6-phosphate synthase from Salmonella paratyphi A (strain ATCC 9150 / SARB42).